Reading from the N-terminus, the 582-residue chain is mRNA-decapping enzyme 1A (582 aa).

Phosphoserine is present on S62. Residues R132–Q141 are compositionally biased toward basic and acidic residues. Disordered regions lie at residues R132–P154 and Q172–H214. 6 positions are modified to phosphoserine: S142, S179, S180, S315, S319, and S334. Positions M173–E196 are enriched in polar residues. Phosphothreonine is present on T348. S353 carries the phosphoserine modification. At R376 the chain carries Asymmetric dimethylarginine. A Phosphothreonine modification is found at T401. 4 positions are modified to phosphoserine: S422, S522, S523, and S525. The interval R513–R536 is disordered. Residues S522–E533 show a composition bias toward polar residues. Residues T528 and T531 each carry the phosphothreonine modification.

This sequence belongs to the DCP1 family. In terms of assembly, (Microbial infection) Interacts with rotavirus A non-structural protein 2; this interaction probably plays a role in the sequestration of DCP1A in viral factories. Interacts with rotavirus A non-structural protein 5; this interaction probably plays a role in its sequestration in viral factories. Forms a complex with EDC3, DCP2, DDX6 and EDC4/HEDLS, within this complex directly interacts with EDC3. Part of a cytoplasmic complex containing proteins involved in mRNA decay, including XRN1 and LSM1. Interacts with DCP1B. Interacts with DCP2. Interacts with DDX17 in an RNA-independent manner. Interacts with PNRC2. Interacts with SMAD4. Interacts with UPF1. Interacts with ZC3HAV1. Interacts with ZFP36L1. Interacts with NBDY. Interacts with DHX34; the interaction is RNA-independent. In terms of tissue distribution, detected in heart, brain, placenta, lung, skeletal muscle, liver, kidney and pancreas.

It is found in the cytoplasm. The protein resides in the P-body. Its subcellular location is the nucleus. It catalyses the reaction a 5'-end (N(7)-methyl 5'-triphosphoguanosine)-ribonucleoside in mRNA + H2O = N(7)-methyl-GDP + a 5'-end phospho-ribonucleoside in mRNA + 2 H(+). Its function is as follows. Necessary for the degradation of mRNAs, both in normal mRNA turnover and in nonsense-mediated mRNA decay. Removes the 7-methyl guanine cap structure from mRNA molecules, yielding a 5'-phosphorylated mRNA fragment and 7m-GDP. Contributes to the transactivation of target genes after stimulation by TGFB1. Essential for embryonic development. The sequence is that of mRNA-decapping enzyme 1A (DCP1A) from Homo sapiens (Human).